We begin with the raw amino-acid sequence, 206 residues long: Small ribosomal subunit protein uS4 (206 aa).

The segment at 28-48 is disordered; the sequence is YMERRPYGPGEHGRARKKQDS. The region spanning 95–160 is the S4 RNA-binding domain; the sequence is MRLDALVLRA…MPPFQVAAAG (66 aa).

Belongs to the universal ribosomal protein uS4 family. As to quaternary structure, part of the 30S ribosomal subunit. Contacts protein S5. The interaction surface between S4 and S5 is involved in control of translational fidelity.

One of the primary rRNA binding proteins, it binds directly to 16S rRNA where it nucleates assembly of the body of the 30S subunit. Its function is as follows. With S5 and S12 plays an important role in translational accuracy. The sequence is that of Small ribosomal subunit protein uS4 from Paenarthrobacter aurescens (strain TC1).